The chain runs to 170 residues: Sec-independent protein translocase protein TatB (170 aa).

Residues 1 to 21 (MIDFGFDKIALIGAVALIVIG) form a helical membrane-spanning segment. The disordered stretch occupies residues 69-170 (AARNVEQSVS…VARFRPPRPL (102 aa)). Residues 73 to 93 (VEQSVSSEVNRTSSEMNQAWE) are compositionally biased toward polar residues. A compositionally biased stretch (basic residues) spans 128–137 (HPRKNWRLKR).

Belongs to the TatB family. As to quaternary structure, the Tat system comprises two distinct complexes: a TatABC complex, containing multiple copies of TatA, TatB and TatC subunits, and a separate TatA complex, containing only TatA subunits. Substrates initially bind to the TatABC complex, which probably triggers association of the separate TatA complex to form the active translocon.

It is found in the cell inner membrane. Functionally, part of the twin-arginine translocation (Tat) system that transports large folded proteins containing a characteristic twin-arginine motif in their signal peptide across membranes. Together with TatC, TatB is part of a receptor directly interacting with Tat signal peptides. TatB may form an oligomeric binding site that transiently accommodates folded Tat precursor proteins before their translocation. This chain is Sec-independent protein translocase protein TatB, found in Methylibium petroleiphilum (strain ATCC BAA-1232 / LMG 22953 / PM1).